We begin with the raw amino-acid sequence, 832 residues long: pre-rRNA 2'-O-ribose RNA methyltransferase FTSJ3 (832 aa).

Residues G56, W58, D76, D92, and D117 each contribute to the S-adenosyl-L-methionine site. K157 acts as the Proton acceptor in catalysis. Disordered stretches follow at residues 332–358 (INLS…ADEM), 485–523 (RLER…LEEK), and 546–631 (DADE…GLVE). 2 stretches are compositionally biased toward basic and acidic residues: residues 345-358 (EEEK…ADEM) and 485-495 (RLERERREQGV). Residues 503–514 (EEEEEEEEEEEN) are compositionally biased toward acidic residues. Residues 570–579 (KTKKKGQKKK) show a composition bias toward basic residues. A compositionally biased stretch (acidic residues) spans 600 to 618 (AEAEAEQSSDDDSSSDEEG). Residues 726 to 758 (IKKVAEAKARKKRRMLKKMEQMKKKAEAVVSTV) are a coiled coil. The interval 795–832 (GPRVRRPPGVKGQFKVVDSRLKKDVRAQKRKEQKKRRK) is disordered. The span at 811–821 (VDSRLKKDVRA) shows a compositional bias: basic and acidic residues. Residues 822–832 (QKRKEQKKRRK) show a composition bias toward basic residues.

Belongs to the class I-like SAM-binding methyltransferase superfamily. RNA methyltransferase RlmE family. SPB1 subfamily. Interacts with NIP7.

It is found in the nucleus. The protein localises to the nucleolus. It carries out the reaction a ribonucleotide in rRNA + S-adenosyl-L-methionine = a 2'-O-methylribonucleotide in rRNA + S-adenosyl-L-homocysteine + H(+). Functionally, RNA 2'-O-methyltransferase involved in the processing of the 34S pre-rRNA to 18S rRNA and in 40S ribosomal subunit formation. This is pre-rRNA 2'-O-ribose RNA methyltransferase FTSJ3 from Gallus gallus (Chicken).